The chain runs to 243 residues: Pyridoxine 5'-phosphate synthase (243 aa).

N9 serves as a coordination point for 3-amino-2-oxopropyl phosphate. Position 11–12 (11–12) interacts with 1-deoxy-D-xylulose 5-phosphate; that stretch reads DH. R20 contributes to the 3-amino-2-oxopropyl phosphate binding site. The active-site Proton acceptor is the H45. 1-deoxy-D-xylulose 5-phosphate-binding residues include R47 and H52. The Proton acceptor role is filled by E72. T102 serves as a coordination point for 1-deoxy-D-xylulose 5-phosphate. Catalysis depends on H193, which acts as the Proton donor. Residues G194 and 215 to 216 contribute to the 3-amino-2-oxopropyl phosphate site; that span reads GH.

The protein belongs to the PNP synthase family. As to quaternary structure, homooctamer; tetramer of dimers.

Its subcellular location is the cytoplasm. It carries out the reaction 3-amino-2-oxopropyl phosphate + 1-deoxy-D-xylulose 5-phosphate = pyridoxine 5'-phosphate + phosphate + 2 H2O + H(+). The protein operates within cofactor biosynthesis; pyridoxine 5'-phosphate biosynthesis; pyridoxine 5'-phosphate from D-erythrose 4-phosphate: step 5/5. Functionally, catalyzes the complicated ring closure reaction between the two acyclic compounds 1-deoxy-D-xylulose-5-phosphate (DXP) and 3-amino-2-oxopropyl phosphate (1-amino-acetone-3-phosphate or AAP) to form pyridoxine 5'-phosphate (PNP) and inorganic phosphate. In Shigella sonnei (strain Ss046), this protein is Pyridoxine 5'-phosphate synthase.